We begin with the raw amino-acid sequence, 159 residues long: MPKTKHWHYSIPPEELDDERTAKAFIRELRISPKHAREICRAIRGMPLDRAKEFLRRVIRKEEAVPFRKHKKKVPHRRQIRPGWDAGRFPEKAAREILRVLEHAEANAEYKGLDTDRLYIKHIAAHKGRVIRGWIPRAFGRATPFNTPTTHIEVILEER.

The protein belongs to the universal ribosomal protein uL22 family. In terms of assembly, part of the 50S ribosomal subunit.

Its function is as follows. This protein binds specifically to 23S rRNA. It makes multiple contacts with different domains of the 23S rRNA in the assembled 50S subunit and ribosome. Functionally, the globular domain of the protein is located near the polypeptide exit tunnel on the outside of the subunit, while an extended beta-hairpin is found that lines the wall of the exit tunnel in the center of the 70S ribosome. The protein is Large ribosomal subunit protein uL22 of Methanopyrus kandleri (strain AV19 / DSM 6324 / JCM 9639 / NBRC 100938).